A 203-amino-acid polypeptide reads, in one-letter code: Probable chemoreceptor glutamine deamidase CheD (203 aa).

This sequence belongs to the CheD family.

It carries out the reaction L-glutaminyl-[protein] + H2O = L-glutamyl-[protein] + NH4(+). In terms of biological role, probably deamidates glutamine residues to glutamate on methyl-accepting chemotaxis receptors (MCPs), playing an important role in chemotaxis. In Methylobacillus flagellatus (strain ATCC 51484 / DSM 6875 / VKM B-1610 / KT), this protein is Probable chemoreceptor glutamine deamidase CheD.